The sequence spans 210 residues: Leucyl/phenylalanyl-tRNA--protein transferase (210 aa).

This sequence belongs to the L/F-transferase family.

It is found in the cytoplasm. It carries out the reaction N-terminal L-lysyl-[protein] + L-leucyl-tRNA(Leu) = N-terminal L-leucyl-L-lysyl-[protein] + tRNA(Leu) + H(+). The enzyme catalyses N-terminal L-arginyl-[protein] + L-leucyl-tRNA(Leu) = N-terminal L-leucyl-L-arginyl-[protein] + tRNA(Leu) + H(+). It catalyses the reaction L-phenylalanyl-tRNA(Phe) + an N-terminal L-alpha-aminoacyl-[protein] = an N-terminal L-phenylalanyl-L-alpha-aminoacyl-[protein] + tRNA(Phe). Functions in the N-end rule pathway of protein degradation where it conjugates Leu, Phe and, less efficiently, Met from aminoacyl-tRNAs to the N-termini of proteins containing an N-terminal arginine or lysine. In Deinococcus radiodurans (strain ATCC 13939 / DSM 20539 / JCM 16871 / CCUG 27074 / LMG 4051 / NBRC 15346 / NCIMB 9279 / VKM B-1422 / R1), this protein is Leucyl/phenylalanyl-tRNA--protein transferase.